We begin with the raw amino-acid sequence, 87 residues long: Cytochrome c oxidase subunit 6B1 (87 aa).

Positions 28 to 74 (TRNCWQNYLDFHRCQKAMTTKGGNVSVCEWYQRVYQSLCPTSWVTDW) constitute a CHCH domain. The Cx9C motif signature appears at 31-41 (CWQNYLDFHRC). Cystine bridges form between C31-C66 and C41-C55. The Cx10C motif motif lies at 55 to 66 (CEWYQRVYQSLC).

Its subcellular location is the mitochondrion intermembrane space. In terms of biological role, connects the two COX monomers into the physiological dimeric form. The sequence is that of Cytochrome c oxidase subunit 6B1 (COX6B1) from Macaca fascicularis (Crab-eating macaque).